A 224-amino-acid polypeptide reads, in one-letter code: Urease accessory protein UreF (224 aa).

The protein belongs to the UreF family. In terms of assembly, ureD, UreF and UreG form a complex that acts as a GTP-hydrolysis-dependent molecular chaperone, activating the urease apoprotein by helping to assemble the nickel containing metallocenter of UreC. The UreE protein probably delivers the nickel.

Its subcellular location is the cytoplasm. Functionally, required for maturation of urease via the functional incorporation of the urease nickel metallocenter. In Pseudomonas fluorescens (strain ATCC BAA-477 / NRRL B-23932 / Pf-5), this protein is Urease accessory protein UreF.